Here is a 74-residue protein sequence, read N- to C-terminus: U3-agatoxin-Ao1f (74 aa).

The first 20 residues, 1–20, serve as a signal peptide directing secretion; sequence MRAIISLLLISTMVFGVIEA. Positions 21-34 are excised as a propeptide; that stretch reads VSLEEGLKIFEGER. 4 disulfide bridges follow: cysteine 37–cysteine 53, cysteine 44–cysteine 58, cysteine 52–cysteine 68, and cysteine 60–cysteine 66. At asparagine 72 the chain carries Asparagine amide.

Belongs to the neurotoxin 07 (Beta/delta-agtx) family. 03 (aga-4) subfamily. Aga sub-subfamily. As to expression, expressed by the venom gland.

It localises to the secreted. Its function is as follows. Insecticidal neurotoxin that modulates the insect Nav channel (DmNaV1/tipE (para/tipE)) in a unique manner, with both the activation and inactivation processes being affected. The voltage dependence of activation is shifted toward more hyperpolarized potentials (analogous to site 4 toxins) and a non-inactivating persistent sodium current is induced (site 3-like action). Interestingly, both effects take place in a voltage-dependent manner, producing a bell-shaped curve between -80 and 0 mV. In vivo, induces an irreversible spastic paralysis when injected into insects. In Agelena orientalis (Funnel-web spider), this protein is U3-agatoxin-Ao1f.